The following is a 161-amino-acid chain: Methylated-DNA--protein-cysteine methyltransferase (161 aa).

The active-site Nucleophile; methyl group acceptor is Cys128.

This sequence belongs to the MGMT family.

The protein localises to the cytoplasm. It carries out the reaction a 6-O-methyl-2'-deoxyguanosine in DNA + L-cysteinyl-[protein] = S-methyl-L-cysteinyl-[protein] + a 2'-deoxyguanosine in DNA. It catalyses the reaction a 4-O-methyl-thymidine in DNA + L-cysteinyl-[protein] = a thymidine in DNA + S-methyl-L-cysteinyl-[protein]. Involved in the cellular defense against the biological effects of O6-methylguanine (O6-MeG) and O4-methylthymine (O4-MeT) in DNA. Repairs the methylated nucleobase in DNA by stoichiometrically transferring the methyl group to a cysteine residue in the enzyme. This is a suicide reaction: the enzyme is irreversibly inactivated. The sequence is that of Methylated-DNA--protein-cysteine methyltransferase from Methanocaldococcus vulcanius (strain ATCC 700851 / DSM 12094 / M7) (Methanococcus vulcanius).